The chain runs to 680 residues: uncharacterized protein (680 aa).

This sequence belongs to the HyuA family.

This is an uncharacterized protein from Methanocaldococcus jannaschii (strain ATCC 43067 / DSM 2661 / JAL-1 / JCM 10045 / NBRC 100440) (Methanococcus jannaschii).